A 469-amino-acid polypeptide reads, in one-letter code: Diacetylchitobiose binding protein NgcE (469 aa).

A signal peptide (tat-type signal) is located at residues 1–37 (MTIRAGSLDRRTLLRGAIATAAMGSFAVACSSPSSED). Residues 30-54 (CSSPSSEDKESDSGPKGEKSANNPF) are disordered. The segment covering 35–48 (SEDKESDSGPKGEK) has biased composition (basic and acidic residues).

This sequence belongs to the bacterial solute-binding protein 1 family. As to quaternary structure, the complex is composed of two ATP-binding proteins (MsiK), two transmembrane proteins (NgcF and NgcG) and a solute-binding protein (NgcE). Predicted to be exported by the Tat system. The position of the signal peptide cleavage has not been experimentally proven.

It localises to the cell membrane. Functionally, part of the ABC transporter complex NgcEFG-MsiK involved in N,N'-diacetylchitobiose ((GlcNAc)2) uptake. Binds (GlcNAc)2. Can also bind GlcNAc. This chain is Diacetylchitobiose binding protein NgcE, found in Streptomyces coelicolor (strain ATCC BAA-471 / A3(2) / M145).